Consider the following 118-residue polypeptide: Down syndrome critical region protein 4 (118 aa).

Positions 1–39 (MSLIILTRDDEPRIFTPDSDAASPALHSTSPLPDPASAS) are disordered. The span at 28-39 (STSPLPDPASAS) shows a compositional bias: low complexity.

Mainly expressed in placenta.

This Homo sapiens (Human) protein is Down syndrome critical region protein 4 (DSCR4).